A 276-amino-acid chain; its full sequence is Diaminopimelate epimerase (276 aa).

Asn-13, Gln-46, and Asn-66 together coordinate substrate. Cys-75 (proton donor) is an active-site residue. Residues 76–77 (GN), Asn-159, Asn-192, and 210–211 (ER) contribute to the substrate site. Cys-219 functions as the Proton acceptor in the catalytic mechanism. 220–221 (GT) is a substrate binding site.

The protein belongs to the diaminopimelate epimerase family. In terms of assembly, homodimer.

The protein localises to the cytoplasm. It carries out the reaction (2S,6S)-2,6-diaminopimelate = meso-2,6-diaminopimelate. It functions in the pathway amino-acid biosynthesis; L-lysine biosynthesis via DAP pathway; DL-2,6-diaminopimelate from LL-2,6-diaminopimelate: step 1/1. Its function is as follows. Catalyzes the stereoinversion of LL-2,6-diaminopimelate (L,L-DAP) to meso-diaminopimelate (meso-DAP), a precursor of L-lysine and an essential component of the bacterial peptidoglycan. The chain is Diaminopimelate epimerase from Pseudomonas fluorescens (strain Pf0-1).